A 285-amino-acid polypeptide reads, in one-letter code: MPAATVDHSQRICEVWACNLDEEMKKIRQVIRKYNYVAMDTEFPGVVARPIGEFRSNADYQYQLLRCNVDLLKIIQLGLTFMNEQGEYPPGTSTWQFNFKFNLTEDMYAQDSIELLTTSGIQFKKHEEEGIETQYFAELLMTSGVVLCEGVKWLSFHSGYDFGYLIKILTNSNLPEEELDFFEILRLFFPVIYDVKYLMKSCKNLKGGLQEVAEQLELERIGPQHQAGSDSLLTGMAFFKMREMFFEDHIDDAKYCGHLYGLGSGSSYVQNGTGNAYEEEANKQS.

Residues Asp-40, Glu-42, Asp-161, Asp-230, and Glu-278 each coordinate a divalent metal cation.

This sequence belongs to the CAF1 family. Component of the CCR4-NOT complex. Requires Mn(2+) as cofactor. Mg(2+) serves as cofactor. The cofactor is Co(2+).

It is found in the nucleus. The protein localises to the cytoplasm. It carries out the reaction Exonucleolytic cleavage of poly(A) to 5'-AMP.. Functionally, has 3'-5' poly(A) exoribonuclease activity for synthetic poly(A) RNA substrate. Catalytic component of the CCR4-NOT complex which is one of the major cellular mRNA deadenylases and is linked to various cellular processes including bulk mRNA degradation, miRNA-mediated repression, translational repression during translational initiation and general transcription regulation. During miRNA-mediated repression the complex also seems to act as translational repressor during translational initiation. Additional complex functions may be a consequence of its influence on mRNA expression. In Gallus gallus (Chicken), this protein is CCR4-NOT transcription complex subunit 7 (CNOT7).